Reading from the N-terminus, the 1273-residue chain is MEKTMFAYSWHQTDDETKNWSKSKESLRIYGITDDGKTICLIVNDFKPFVHVELPSSINWRQKIGGQPKVQKIMDYLNFILGDLKPVKNRTIFIDKYKLYGSNYVQTSPGVFQRKKFPYLVLFFESRKHIKNLEYKLKNTVDVPGFGKIKLNVRETNVSPILQLCVERNLPSAGWIGFKVEGRGALAGYGELVEEKKKFTDCDEEYVISKNYIYSIDKHVPVKAKVMAWDIEVYSEDGNFPDAMKPGNVVFQISCIFFIVGTSYKQKYLLTLGDPLEYTTTPINEEGCGKDTIVCKFKTEEDLIIAFSSLQKREKPHITTGWNIFNFDTTFLLKRAKLHRCLPNFLLQGFPKDQLGKEKEIKWQSKAYGTTDLKFIDCEGILCIDLMDVVQKEHKLDSYSLNFVAKHFLGSKKDDLKPKEIFICYREGIKKEVKNIVIHPLSNNLNIYLGKEEIMIENKKFKKPLKPFFRIQNTGKLVSDEDDSVFHVNYRGEVFSFLIAVHNEEKYEIKTVSEFNNYKNAYGTYTLSAQKAMAKVGKYCVQDSVLVADIFEHLQTWLSFSEMSRTCTTPIMTIHVHGQQVKFFNQVYKYCYDHKTVTDKETYKVDEKERYRGAEVFDPVPGLKRNVVPLDFASLYPSLIIARNMCYSTFVDNDDIPDEMCHVMEWDDHVACSHDPKVIRKNAITEELEKLKKIANAKKMYTQGTRTYKKMMCSYLVMENTKEKTEMSKHLKDLDRENNELLNIVNKQTPGYIESIKKKISDLTSERSEITKKLSKSVMCVSNRRYRFLKEPKGILPTIIQNLLDARKNTRTEIKNYKSRLALLMEKENKSKEDIDEITSIENLLPILDKRQNSYKISANSMYGATGVRVGALPFMPIAMCTTYMGRKSIVEVSQYLKELGGRVVYGDTDSNYVTFDDVVDKNVKVGTEEFSREMKKLWNHAIEIAKTISKKFDNPITLEFENAIYFKFLILTKKRYMYYTCGKDGNILMDANGKPKMGQRGVILSRRDNCKYMKDVYANVIDKIFDEQSENEILNGVVEKMLNLYTRQIEFTSCEKDENYLKNLIVTKSVGDYGGDKATFEPILGKNEKGEDKWKIGNYVVPLITDEIIKTCGTNGLPMTQNEIKDWYLERLPCQVQLEVKIKRRGHNKEEGQRLSYVVTDIGCKGKQSEKIESVEYFKTHSKVLKLDYGYYIERLIEPLDQVFQAVFKNCQEKETIYSDNFRKTKLFSIFEKRGKHSQANFTKELHKLCSVTKPKLINEIKSFSKPDLVFV.

Residues 679–837 (IRKNAITEEL…ENKSKEDIDE (159 aa)) are a coiled coil.

It belongs to the DNA polymerase type-B family.

It catalyses the reaction DNA(n) + a 2'-deoxyribonucleoside 5'-triphosphate = DNA(n+1) + diphosphate. Functionally, DNA-directed DNA polymerase involved in viral DNA replication. In Invertebrate iridescent virus 6 (IIV-6), this protein is DNA polymerase 037L (DPOL).